A 146-amino-acid chain; its full sequence is uncharacterized protein (146 aa).

Residues 1–137 (MLSQEFFNSF…TINVMNQIHK (137 aa)) enclose the HTH marR-type domain.

This is an uncharacterized protein from Staphylococcus aureus (strain MW2).